The primary structure comprises 298 residues: Lipoyl synthase (298 aa).

7 residues coordinate [4Fe-4S] cluster: Cys40, Cys45, Cys51, Cys67, Cys71, Cys74, and Ser280. The Radical SAM core domain maps to 53–269; that stretch reads AVRKTATFMI…KEIALSKGFS (217 aa).

The protein belongs to the radical SAM superfamily. Lipoyl synthase family. Requires [4Fe-4S] cluster as cofactor.

The protein localises to the cytoplasm. It catalyses the reaction [[Fe-S] cluster scaffold protein carrying a second [4Fe-4S](2+) cluster] + N(6)-octanoyl-L-lysyl-[protein] + 2 oxidized [2Fe-2S]-[ferredoxin] + 2 S-adenosyl-L-methionine + 4 H(+) = [[Fe-S] cluster scaffold protein] + N(6)-[(R)-dihydrolipoyl]-L-lysyl-[protein] + 4 Fe(3+) + 2 hydrogen sulfide + 2 5'-deoxyadenosine + 2 L-methionine + 2 reduced [2Fe-2S]-[ferredoxin]. It functions in the pathway protein modification; protein lipoylation via endogenous pathway; protein N(6)-(lipoyl)lysine from octanoyl-[acyl-carrier-protein]. In terms of biological role, catalyzes the radical-mediated insertion of two sulfur atoms into the C-6 and C-8 positions of the octanoyl moiety bound to the lipoyl domains of lipoate-dependent enzymes, thereby converting the octanoylated domains into lipoylated derivatives. The polypeptide is Lipoyl synthase (Bacillus cereus (strain B4264)).